Here is a 242-residue protein sequence, read N- to C-terminus: Probable transcriptional regulatory protein Bmul_0984/BMULJ_02280 (242 aa).

This sequence belongs to the TACO1 family.

It localises to the cytoplasm. This Burkholderia multivorans (strain ATCC 17616 / 249) protein is Probable transcriptional regulatory protein Bmul_0984/BMULJ_02280.